A 134-amino-acid polypeptide reads, in one-letter code: MVKFLKSGKVVVVLSGRFAGKKAVIVRNFDDGTSSRPYGHALVVGLQKEPRKVTKRQSQKKQAKKSTLKTFIKTVNYNHLMPTRYTLDVDFKGVAAEAQENPTKKVEARKECKKLLEEKFKTGKNRWFFTKLRF.

Residues 5-40 (LKSGKVVVVLSGRFAGKKAVIVRNFDDGTSSRPYGH) enclose the KOW domain.

The protein belongs to the eukaryotic ribosomal protein eL27 family.

The protein is Large ribosomal subunit protein eL27 (RPL27) of Pyrobotrys stellatus (Green alga).